Here is a 256-residue protein sequence, read N- to C-terminus: MAVGKNKRLSKGKKGLKKKIIDPFTRKDWFDIKAPSTFENRNVGKTLINRSTGMKNAADGLKGRIVEVNLADLQGSEDHSYRNVKLRVDEVQGKNLLTNFHGLSFTSDKLRSLVRKWQSLVEANVTVKTADDYVLRVFALAFTKRQANQVKKTTYAQSSKLREVRKKMSEIMQREVSAVTLAQLTSKLIPEVIGREIEKSTQTIFPLQNVHIRKVKVLKQPKFDLGALLALHGESGGEEKGRKVNTGFKDVVLESV.

Ala2 carries the post-translational modification N-acetylalanine; partial.

The protein belongs to the eukaryotic ribosomal protein eS1 family. In terms of assembly, component of the small ribosomal subunit. Mature ribosomes consist of a small (40S) and a large (60S) subunit. The 40S subunit contains about 33 different proteins and 1 molecule of RNA (18S). The 60S subunit contains about 49 different proteins and 3 molecules of RNA (25S, 5.8S and 5S).

It localises to the cytoplasm. The polypeptide is Small ribosomal subunit protein eS1A (Scheffersomyces stipitis (strain ATCC 58785 / CBS 6054 / NBRC 10063 / NRRL Y-11545) (Yeast)).